Reading from the N-terminus, the 397-residue chain is Autophagy-related protein 29 (397 aa).

The interval 71-397 is disordered; the sequence is ATAAVRNSGP…RSRYTSSSNQ (327 aa). Positions 230–240 are enriched in acidic residues; it reads QYEDDDDDESE. Polar residues predominate over residues 245 to 259; sequence PYTSPSSKTSAQDLG. Residues 269–282 show a composition bias toward basic residues; sequence SGKRPHKSHGKPAI. Composition is skewed to basic and acidic residues over residues 300–309 and 330–341; these read KPDKTDRSTE and GGKDKGYSREGS. 2 stretches are compositionally biased toward polar residues: residues 343 to 363 and 381 to 397; these read GTPS…TQSA and FSIS…SSNQ.

It belongs to the ATG29 family. In terms of assembly, forms a stable complex with ATG17 and ATG31. Interacts directly with ATG31. The ATG17-ATG29-ATG31 complex interacts with the ATG1-ATG13 complex. Note=The interaction with the ATG1-ATG13 complex is induced by starvation.

It localises to the preautophagosomal structure. Its function is as follows. Plays a role in autophagy. Functions at the preautophagosomal structure (PAS) in order to form normal autophagosomes under starvation conditions. Also plays a role in mitophagy. Autophagy is required for proper vegetative growth, asexual/sexual reproduction, and full virulence. Autophagy is particularly involved in the biosynthesis of deoxynivalenol (DON), an important virulence determinant. In Gibberella zeae (strain ATCC MYA-4620 / CBS 123657 / FGSC 9075 / NRRL 31084 / PH-1) (Wheat head blight fungus), this protein is Autophagy-related protein 29.